The sequence spans 391 residues: Probable sugar efflux transporter (391 aa).

12 helical membrane-spanning segments follow: residues 16 to 36 (VFVF…PVAL), 51 to 71 (VGLM…PLML), 82 to 102 (LLFL…AWNF), 103 to 123 (WVLL…WSIT), 138 to 158 (QALG…LPLG), 171 to 191 (FGVI…LLPP), 210 to 230 (PLLM…FTTY), 247 to 267 (ITTL…FLFG), 277 to 297 (FIAF…VFKN), 300 to 320 (WVIF…TIAL), 338 to 358 (IFSG…SIVI), and 361 to 381 (LGLG…LFWL).

Belongs to the major facilitator superfamily. SotB (TC 2.A.1.2) family.

It localises to the cell inner membrane. Its function is as follows. Involved in the efflux of sugars. The physiological role may be the reduction of the intracellular concentration of toxic sugars or sugar metabolites. This chain is Probable sugar efflux transporter, found in Helicobacter pylori (strain G27).